The following is a 203-amino-acid chain: Inosine triphosphate pyrophosphatase (203 aa).

13 to 18 lines the ITP pocket; the sequence is TGNAKK. Mg(2+) is bound at residue E43. ITP is bound by residues K55, 71–72, K88, 147–150, K170, and 175–176; these read DT, FGWD, and HR.

It belongs to the HAM1 NTPase family. Homodimer. Requires Mg(2+) as cofactor. The cofactor is Mn(2+).

It is found in the cytoplasm. The catalysed reaction is ITP + H2O = IMP + diphosphate + H(+). The enzyme catalyses dITP + H2O = dIMP + diphosphate + H(+). It carries out the reaction XTP + H2O = XMP + diphosphate + H(+). It catalyses the reaction N(6)-hydroxy-dATP + H2O = N(6)-hydroxy-dAMP + diphosphate + H(+). Pyrophosphatase that hydrolyzes the non-canonical purine nucleotides inosine triphosphate (ITP), deoxyinosine triphosphate (dITP) as well as 2'-deoxy-N-6-hydroxylaminopurine triphosphate (dHAPTP) and xanthosine 5'-triphosphate (XTP) to their respective monophosphate derivatives. The enzyme does not distinguish between the deoxy- and ribose forms. Probably excludes non-canonical purines from RNA and DNA precursor pools, thus preventing their incorporation into RNA and DNA and avoiding chromosomal lesions. The chain is Inosine triphosphate pyrophosphatase (itpa) from Danio rerio (Zebrafish).